Consider the following 573-residue polypeptide: MKRISPLNTLFYLSLFFSYTFKGLKCTRIYKIGTKALPCSECHDVFDCTGCLFEEKESSHVIPLKLNKKNPNDHKKLQKHHESLKLGDVKYYVNRGEGISGSLGTSSGNTLDDMDLINEEINKKRTNAQLDEKNFLDFTTYNKNKAQDISDHLSDIQKHVYEQDAQKGNKNFTNNENNSDNENNSDNENNSDNENNLDNENNLDNENNSDNSSIEKNFIALENKNATVEQTKENIFLVPLKHLRDSQFVGELLVGTPPQTVYPIFDTGSTNVWVVTTACEEESCKKVRRYDPNKSKTFRRSFIEKNLHIVFGSGSISGSVGTDTFMLGKHLVRNQTFGLVESESNNNKNGGDNIFDYISFEGIVGLGFPGMLSAGNIPFFDNLLKQNPNVDPQFSFYISPYDGKSTLIIGGISKSFYEGDIYMLPVLKESYWEVKLDELYIGKERICCDEESYVIFDTGTSYNTMPSSQMKTFLNLIHSTACTEQNYKDILKSYPIIKYVFGELIIELHPEEYMILNDDVCMPAYMQIDVPSERNHAYLLGSLSFMRNFFTVFVRGTESRPSMVGVARAKSKN.

A signal peptide spans 1-26 (MKRISPLNTLFYLSLFFSYTFKGLKC). A propeptide spanning residues 27 to 221 (TRIYKIGTKA…SSIEKNFIAL (195 aa)) is cleaved from the precursor. Cystine bridges form between Cys39/Cys51 and Cys42/Cys48. Positions 167–211 (KGNKNFTNNENNSDNENNSDNENNSDNENNLDNENNLDNENNSDN) are disordered. Residues 183–203 (NNSDNENNSDNENNLDNENNL) show a composition bias toward acidic residues. The 320-residue stretch at 248 to 567 (FVGELLVGTP…ESRPSMVGVA (320 aa)) folds into the Peptidase A1 domain. Asp266 is a catalytic residue. Cys279 and Cys284 form a disulfide bridge. N-linked (GlcNAc...) asparagine glycosylation occurs at Asn334. Cys447 and Cys448 are disulfide-bonded. Residue Asp457 is part of the active site. A disulfide bond links Cys482 and Cys521.

It belongs to the peptidase A1 family. Post-translationally, autocleaved into a p16 prodomain form and two mature forms p44 and p51.

It localises to the cytoplasmic vesicle. The protein localises to the secretory vesicle. Its activity is regulated as follows. Inhibited by aminohydantoin compounds such as CWHM-117. Functionally, during the asexual blood stage, processes key proteins essential for merozoite egress and invasion of host erythrocytes. Cleaves and activates proteases SUB1 and SUB2. May process members of the EBL and Rh protein families. Also cleaves apical membrane protein AMA1. During the mosquito vector stage and probably in ookinetes, cleaves CelTOS. The sequence is that of Plasmepsin X from Plasmodium falciparum (isolate NF54).